Here is a 1139-residue protein sequence, read N- to C-terminus: Retinoblastoma-like protein 2 (1139 aa).

A disordered region spans residues 1–45; the sequence is MPSGGDQSPPPPPPPPAAAASDEEEEDDGEAEDAAPPAESPTPQI. The segment covering 8 to 17 has biased composition (pro residues); it reads SPPPPPPPPA. Residues 21-33 show a composition bias toward acidic residues; that stretch reads SDEEEEDDGEAED. Ser-413 carries the post-translational modification Phosphoserine. Thr-417 carries the post-translational modification Phosphothreonine. A domain A region spans residues 417 to 616; that stretch reads TPVSTATHSL…EKIRDNENRV (200 aa). A pocket; binds E1A region spans residues 417-1024; sequence TPVSTATHSL…KQIKTFAMKY (608 aa). A glycan (O-linked (GlcNAc) serine) is linked at Ser-420. Positions 617–827 are spacer; the sequence is PTCEEVMPPQ…KQGQSVTSSS (211 aa). Ser-639 carries the phosphoserine modification. Thr-642 carries the post-translational modification Phosphothreonine. The tract at residues 654 to 678 is disordered; that stretch reads GGLGRSITSPTTLYDRYSSPPASTT. Residues Ser-662, Ser-672, and Ser-688 each carry the phosphoserine modification. Positions 810-827 are enriched in low complexity; it reads ISPGGQQQKQGQSVTSSS. Disordered regions lie at residues 810-831 and 933-999; these read ISPG…NRPR and KGKR…DMEE. Residues 828–1024 are domain B; sequence NRPRKTSSLS…KQIKTFAMKY (197 aa). Positions 941–955 are enriched in polar residues; sequence SGSSDSRSHQNSPTE. 6 positions are modified to phosphoserine: Ser-948, Ser-952, Ser-966, Ser-971, Ser-972, and Ser-973. Residues 964 to 973 are compositionally biased toward low complexity; sequence DSSPVMRSSS. Thr-974 bears the Phosphothreonine mark. Positions 977–987 are enriched in pro residues; the sequence is VPQPSSAPPTP. 2 positions are modified to phosphoserine: Ser-981 and Ser-982. Thr-986 carries the phosphothreonine modification. Residues Ser-1035, Ser-1068, Ser-1080, and Ser-1112 each carry the phosphoserine modification.

It belongs to the retinoblastoma protein (RB) family. As to quaternary structure, interacts with AATF. Interacts with KMT5B, KMT5C and USP4. Component of the DREAM complex (also named LINC complex) at least composed of E2F4, E2F5, LIN9, LIN37, LIN52, LIN54, MYBL1, MYBL2, RBL1, RBL2, RBBP4, TFDP1 and TFDP2. The complex exists in quiescent cells where it represses cell cycle-dependent genes. It dissociates in S phase when LIN9, LIN37, LIN52 and LIN54 form a subcomplex that binds to MYBL2. Interacts with RINT1. Interacts with PML (isoform PML-1, isoform PML-2, isoform PML-3, isoform PML-4 and isoform PML-5). Interacts with RBBP9. Interacts with CD53. In terms of assembly, (Microbial infection) Interacts with JC virus small t antigen. Post-translationally, during G0 and early G1 phase of the cell cycle, phosphorylated on Ser-639 and on 5 sites within the domain B. Phosphorylation on Ser-672 in G1 leads to its ubiquitin-dependent proteolysis.

It is found in the nucleus. Key regulator of entry into cell division. Directly involved in heterochromatin formation by maintaining overall chromatin structure and, in particular, that of constitutive heterochromatin by stabilizing histone methylation. Recruits and targets histone methyltransferases KMT5B and KMT5C, leading to epigenetic transcriptional repression. Controls histone H4 'Lys-20' trimethylation. Probably acts as a transcription repressor by recruiting chromatin-modifying enzymes to promoters. Potent inhibitor of E2F-mediated trans-activation, associates preferentially with E2F5. Binds to cyclins A and E. Binds to and may be involved in the transforming capacity of the adenovirus E1A protein. May act as a tumor suppressor. The sequence is that of Retinoblastoma-like protein 2 (RBL2) from Homo sapiens (Human).